Here is a 338-residue protein sequence, read N- to C-terminus: Triplex capsid protein 1 (338 aa).

The protein belongs to the herpesviridae TRX1 protein family. As to quaternary structure, interacts with TRX2, MCP and capsid vertex component 2/CVC2.

It is found in the virion. It localises to the host nucleus. In terms of biological role, structural component of the T=16 icosahedral capsid. The capsid is composed of pentamers and hexamers of major capsid protein/MCP, which are linked together by heterotrimers called triplexes. These triplexes are formed by a single molecule of triplex protein 1/TRX1 and two copies of triplex protein 2/TRX2. Additionally, TRX1 is required for efficient transport of TRX2 to the nucleus, which is the site of capsid assembly. The protein is Triplex capsid protein 1 of Equine herpesvirus 2 (strain 86/87) (EHV-2).